The primary structure comprises 402 residues: Acyl-[acyl-carrier-protein] desaturase 3, chloroplastic (402 aa).

A chloroplast-targeting transit peptide spans 1–32 (MSLTGCLPPRPPCSMRRRTSGGGASVSPVVAM). The segment at 1-66 (MSLTGCLPPR…EVPPQVTHTL (66 aa)) is disordered. The Fe cation site is built by E139, E178, H181, E231, E264, and H267.

The protein belongs to the fatty acid desaturase type 2 family. In terms of assembly, homodimer. Fe(2+) is required as a cofactor.

It localises to the plastid. The protein resides in the chloroplast. The protein operates within lipid metabolism; fatty acid metabolism. Its function is as follows. Introduces a cis double bond in the acyl chain of an acyl-[acyl-carrier protein]. The protein is Acyl-[acyl-carrier-protein] desaturase 3, chloroplastic of Oryza sativa subsp. japonica (Rice).